The sequence spans 248 residues: Type II secretion system protein N (248 aa).

Residues 1–6 (MKLKSG) are Cytoplasmic-facing. A helical; Signal-anchor for type II membrane protein transmembrane segment spans residues 7 to 27 (IVTGVALVLAYGLFLASYAPA). At 28-248 (RLLTAVPLPA…RTLNFQGRLL (221 aa)) the chain is on the periplasmic side.

Belongs to the GSP N family.

It localises to the cell inner membrane. Involved in a type II secretion system (T2SS, formerly general secretion pathway, GSP) for the export of proteins. Required for the translocation of the multiple pectic enzymes. The polypeptide is Type II secretion system protein N (outN) (Pectobacterium carotovorum subsp. carotovorum (Erwinia carotovora subsp. carotovora)).